Here is a 543-residue protein sequence, read N- to C-terminus: Carboxypeptidase Y homolog A (543 aa).

A signal peptide spans 1–17 (MRVLPATLLVGAATAAA). Positions 18–124 (PPFQQILGLP…KLEAYDLRVK (107 aa)) are excised as a propeptide. 5 disulfides stabilise this stretch: cysteine 179–cysteine 419, cysteine 313–cysteine 327, cysteine 337–cysteine 360, cysteine 344–cysteine 353, and cysteine 382–cysteine 389. Asparagine 210 is a glycosylation site (N-linked (GlcNAc...) asparagine). Residue serine 266 is part of the active site. The active site involves aspartate 458. Asparagine 509 carries an N-linked (GlcNAc...) asparagine glycan. Histidine 520 is a catalytic residue.

This sequence belongs to the peptidase S10 family.

It localises to the vacuole. The enzyme catalyses Release of a C-terminal amino acid with broad specificity.. Functionally, vacuolar carboxypeptidase involved in degradation of small peptides. Digests preferentially peptides containing an aliphatic or hydrophobic residue in P1' position, as well as methionine, leucine or phenylalanine in P1 position of ester substrate. The polypeptide is Carboxypeptidase Y homolog A (cpyA) (Aspergillus fumigatus (strain ATCC MYA-4609 / CBS 101355 / FGSC A1100 / Af293) (Neosartorya fumigata)).